A 139-amino-acid chain; its full sequence is ATP synthase epsilon chain (139 aa).

The protein belongs to the ATPase epsilon chain family. In terms of assembly, F-type ATPases have 2 components, CF(1) - the catalytic core - and CF(0) - the membrane proton channel. CF(1) has five subunits: alpha(3), beta(3), gamma(1), delta(1), epsilon(1). CF(0) has three main subunits: a, b and c.

It localises to the cell inner membrane. Produces ATP from ADP in the presence of a proton gradient across the membrane. The sequence is that of ATP synthase epsilon chain from Pseudomonas syringae pv. tomato (strain ATCC BAA-871 / DC3000).